The following is a 456-amino-acid chain: Trigger factor (456 aa).

The PPIase FKBP-type domain maps to 166–245 (GDYANIDLNA…VNSVKAEELP (80 aa)).

This sequence belongs to the FKBP-type PPIase family. Tig subfamily.

It is found in the cytoplasm. The enzyme catalyses [protein]-peptidylproline (omega=180) = [protein]-peptidylproline (omega=0). Its function is as follows. Involved in protein export. Acts as a chaperone by maintaining the newly synthesized protein in an open conformation. Functions as a peptidyl-prolyl cis-trans isomerase. The sequence is that of Trigger factor from Bifidobacterium adolescentis (strain ATCC 15703 / DSM 20083 / NCTC 11814 / E194a).